The primary structure comprises 164 residues: HTH-type transcriptional regulator IscR (164 aa).

Residues 2-131 (RLTSKGRYAV…NNITLDELVN (130 aa)) enclose the HTH rrf2-type domain. A DNA-binding region (H-T-H motif) is located at residues 28 to 51 (LADISERQGISLSYLEQLFSRLRK). C92, C98, and C104 together coordinate [2Fe-2S] cluster.

It depends on [2Fe-2S] cluster as a cofactor.

Regulates the transcription of several operons and genes involved in the biogenesis of Fe-S clusters and Fe-S-containing proteins. This chain is HTH-type transcriptional regulator IscR, found in Pectobacterium carotovorum subsp. carotovorum (strain PC1).